The chain runs to 128 residues: Small ribosomal subunit protein uS11 (128 aa).

It belongs to the universal ribosomal protein uS11 family. In terms of assembly, part of the 30S ribosomal subunit. Interacts with proteins S7 and S18. Binds to IF-3.

Located on the platform of the 30S subunit, it bridges several disparate RNA helices of the 16S rRNA. Forms part of the Shine-Dalgarno cleft in the 70S ribosome. The protein is Small ribosomal subunit protein uS11 of Ligilactobacillus salivarius (strain UCC118) (Lactobacillus salivarius).